A 150-amino-acid chain; its full sequence is Dual specificity protein phosphatase 23 (150 aa).

One can recognise a Tyrosine-protein phosphatase domain in the interval 7–150; sequence NFSWVLPGRL…AVFQFYQRTK (144 aa). The Phosphocysteine intermediate role is filled by Cys95.

Belongs to the protein-tyrosine phosphatase family. Non-receptor class dual specificity subfamily. Widely expressed.

Its subcellular location is the cytoplasm. It localises to the cytosol. The protein resides in the nucleus. It carries out the reaction O-phospho-L-tyrosyl-[protein] + H2O = L-tyrosyl-[protein] + phosphate. The catalysed reaction is O-phospho-L-seryl-[protein] + H2O = L-seryl-[protein] + phosphate. The enzyme catalyses O-phospho-L-threonyl-[protein] + H2O = L-threonyl-[protein] + phosphate. Its function is as follows. Protein phosphatase that mediates dephosphorylation of proteins phosphorylated on Tyr and Ser/Thr residues. In vitro, it can dephosphorylate p44-ERK1 (MAPK3) but not p54 SAPK-beta (MAPK10) in vitro. Able to enhance activation of JNK and p38 (MAPK14). The protein is Dual specificity protein phosphatase 23 (Dusp23) of Mus musculus (Mouse).